Consider the following 250-residue polypeptide: uncharacterized protein (250 aa).

A disordered region spans residues 182–205; the sequence is HTPIVSIQTPPPPAPTPNRPDVPA. A compositionally biased stretch (pro residues) spans 190–201; it reads TPPPPAPTPNRP. The chain crosses the membrane as a helical span at residues 230–250; it reads TRISVIPLLSVLLLVIIIILL.

Belongs to the ascovirus HvAV ORF18 family.

It is found in the membrane. This is an uncharacterized protein from Spodoptera frugiperda ascovirus 1a (SfAV-1a).